The primary structure comprises 297 residues: Protoheme IX farnesyltransferase (297 aa).

Transmembrane regions (helical) follow at residues 26-46, 48-68, 96-116, 120-140, 147-167, 174-194, 218-238, 243-263, and 276-296; these read VTQLAVFCAVIGMFLATPGMV, YPVLFGGIAGIWLLAGAAFAV, FHIIIFSIILGSLGMIILWNF, LTMWLTLATFVGYAVIYTWLL, NIVIGGLSGAMPPALGWAAVT, AWLLVLIIFVWTPPHFWALAL, LLNILLYTLILIAATLLPYIY, IIYLISAIVLGLMFLAYVIAL, and FRFSITYLSLLFAALLIDHYF.

Belongs to the UbiA prenyltransferase family. Protoheme IX farnesyltransferase subfamily.

The protein resides in the cell membrane. It catalyses the reaction heme b + (2E,6E)-farnesyl diphosphate + H2O = Fe(II)-heme o + diphosphate. It participates in porphyrin-containing compound metabolism; heme O biosynthesis; heme O from protoheme: step 1/1. In terms of biological role, converts heme B (protoheme IX) to heme O by substitution of the vinyl group on carbon 2 of heme B porphyrin ring with a hydroxyethyl farnesyl side group. The sequence is that of Protoheme IX farnesyltransferase from Polynucleobacter asymbioticus (strain DSM 18221 / CIP 109841 / QLW-P1DMWA-1) (Polynucleobacter necessarius subsp. asymbioticus).